Here is a 155-residue protein sequence, read N- to C-terminus: 6,7-dimethyl-8-ribityllumazine synthase (155 aa).

5-amino-6-(D-ribitylamino)uracil contacts are provided by residues phenylalanine 23, 57 to 59 (AFE), and 81 to 83 (AVI). A (2S)-2-hydroxy-3-oxobutyl phosphate-binding site is contributed by 86–87 (ST). The Proton donor role is filled by histidine 89. Residue phenylalanine 114 coordinates 5-amino-6-(D-ribitylamino)uracil. Arginine 128 contributes to the (2S)-2-hydroxy-3-oxobutyl phosphate binding site.

The protein belongs to the DMRL synthase family.

It catalyses the reaction (2S)-2-hydroxy-3-oxobutyl phosphate + 5-amino-6-(D-ribitylamino)uracil = 6,7-dimethyl-8-(1-D-ribityl)lumazine + phosphate + 2 H2O + H(+). It participates in cofactor biosynthesis; riboflavin biosynthesis; riboflavin from 2-hydroxy-3-oxobutyl phosphate and 5-amino-6-(D-ribitylamino)uracil: step 1/2. Functionally, catalyzes the formation of 6,7-dimethyl-8-ribityllumazine by condensation of 5-amino-6-(D-ribitylamino)uracil with 3,4-dihydroxy-2-butanone 4-phosphate. This is the penultimate step in the biosynthesis of riboflavin. The chain is 6,7-dimethyl-8-ribityllumazine synthase from Citrifermentans bemidjiense (strain ATCC BAA-1014 / DSM 16622 / JCM 12645 / Bem) (Geobacter bemidjiensis).